Here is a 220-residue protein sequence, read N- to C-terminus: Deoxyribose-phosphate aldolase (220 aa).

Asp89 (proton donor/acceptor) is an active-site residue. Catalysis depends on Lys151, which acts as the Schiff-base intermediate with acetaldehyde. The Proton donor/acceptor role is filled by Lys180.

It belongs to the DeoC/FbaB aldolase family. DeoC type 1 subfamily.

The protein resides in the cytoplasm. The enzyme catalyses 2-deoxy-D-ribose 5-phosphate = D-glyceraldehyde 3-phosphate + acetaldehyde. It participates in carbohydrate degradation; 2-deoxy-D-ribose 1-phosphate degradation; D-glyceraldehyde 3-phosphate and acetaldehyde from 2-deoxy-alpha-D-ribose 1-phosphate: step 2/2. Catalyzes a reversible aldol reaction between acetaldehyde and D-glyceraldehyde 3-phosphate to generate 2-deoxy-D-ribose 5-phosphate. This Staphylococcus carnosus (strain TM300) protein is Deoxyribose-phosphate aldolase.